The following is a 204-amino-acid chain: Protein OPG030 (204 aa).

Residues 95–177 (FLRQYINNNI…ITYSELTNAI (83 aa)) enclose the BACK domain.

This sequence belongs to the orthopoxvirus OPG030 family.

In Bos taurus (Bovine), this protein is Protein OPG030 (OPG30).